The sequence spans 417 residues: MLEQMGKAAKQASWQLAVLSTAKKNQVLSVIADKLEAESEVILQANEQDMEQARASGMSEALLDRLLLTPARLAAIANDVRQVCRLNDPVGHVLDGSLLDSGLKLERRRVPLGVIGVIYEARPNVTIDVASLCLKTGNAVILRGGKETHHTNQATVKVIQQALEQCGLPAAAVQAIESPDRALVNELLRLDRYVDMLIPRGGAGLHKLCREQSTIPVITGGIGVCHTYVDDSVDFDKALTVIENAKIQRPSACNSLETLLVNRNIAAEFLPALSSKMAVVGVTLHAAENAMPMLQDGPATVVAVAAEDYDDEWLSLDLNVALVDDIDQAIDHIRTHGTSHSDAILTRSLSSAEHFVRAVDSSAVYVNASTRFTDGGQFGLGAEVAVSTQKLHARGPMGLDALTTYKWIGYGDDLVRS.

It belongs to the gamma-glutamyl phosphate reductase family.

The protein localises to the cytoplasm. The enzyme catalyses L-glutamate 5-semialdehyde + phosphate + NADP(+) = L-glutamyl 5-phosphate + NADPH + H(+). The protein operates within amino-acid biosynthesis; L-proline biosynthesis; L-glutamate 5-semialdehyde from L-glutamate: step 2/2. In terms of biological role, catalyzes the NADPH-dependent reduction of L-glutamate 5-phosphate into L-glutamate 5-semialdehyde and phosphate. The product spontaneously undergoes cyclization to form 1-pyrroline-5-carboxylate. The protein is Gamma-glutamyl phosphate reductase of Serratia proteamaculans (strain 568).